Here is a 198-residue protein sequence, read N- to C-terminus: FMN-dependent NADH:quinone oxidoreductase (198 aa).

FMN contacts are provided by residues Ser10, 16–18, 94–97, and 138–141; these read SQS, MYNF, and TRGG.

This sequence belongs to the azoreductase type 1 family. As to quaternary structure, homodimer. Requires FMN as cofactor.

The catalysed reaction is 2 a quinone + NADH + H(+) = 2 a 1,4-benzosemiquinone + NAD(+). It carries out the reaction N,N-dimethyl-1,4-phenylenediamine + anthranilate + 2 NAD(+) = 2-(4-dimethylaminophenyl)diazenylbenzoate + 2 NADH + 2 H(+). Functionally, quinone reductase that provides resistance to thiol-specific stress caused by electrophilic quinones. In terms of biological role, also exhibits azoreductase activity. Catalyzes the reductive cleavage of the azo bond in aromatic azo compounds to the corresponding amines. In Shewanella baltica (strain OS185), this protein is FMN-dependent NADH:quinone oxidoreductase.